A 46-amino-acid chain; its full sequence is Cytochrome b559 subunit beta (46 aa).

The chain crosses the membrane as a helical span at residues 21-37; that stretch reads WLALHTLGIPTVFFLGA. A heme-binding site is contributed by histidine 25.

Belongs to the PsbE/PsbF family. As to quaternary structure, heterodimer of an alpha subunit and a beta subunit. PSII is composed of 1 copy each of membrane proteins PsbA, PsbB, PsbC, PsbD, PsbE, PsbF, PsbH, PsbI, PsbJ, PsbK, PsbL, PsbM, PsbT, PsbX, PsbY, PsbZ, Psb30/Ycf12, peripheral proteins PsbO, CyanoQ (PsbQ), PsbU, PsbV and a large number of cofactors. It forms dimeric complexes. Requires heme b as cofactor.

It is found in the cellular thylakoid membrane. Functionally, this b-type cytochrome is tightly associated with the reaction center of photosystem II (PSII). PSII is a light-driven water:plastoquinone oxidoreductase that uses light energy to abstract electrons from H(2)O, generating O(2) and a proton gradient subsequently used for ATP formation. It consists of a core antenna complex that captures photons, and an electron transfer chain that converts photonic excitation into a charge separation. This Synechococcus sp. (strain CC9605) protein is Cytochrome b559 subunit beta.